A 272-amino-acid chain; its full sequence is Ribonuclease HII (272 aa).

The RNase H type-2 domain maps to 30 to 221 (GPVAGVDEVG…VRRAAEATGV (192 aa)). D36, E37, and D130 together coordinate a divalent metal cation.

Belongs to the RNase HII family. It depends on Mn(2+) as a cofactor. Mg(2+) is required as a cofactor.

Its subcellular location is the cytoplasm. The enzyme catalyses Endonucleolytic cleavage to 5'-phosphomonoester.. In terms of biological role, endonuclease that specifically degrades the RNA of RNA-DNA hybrids. The chain is Ribonuclease HII from Mycolicibacterium smegmatis (strain ATCC 700084 / mc(2)155) (Mycobacterium smegmatis).